Reading from the N-terminus, the 167-residue chain is Large ribosomal subunit protein uL5 (167 aa).

It belongs to the universal ribosomal protein uL5 family. Part of the 50S ribosomal subunit; contacts the 5S rRNA and probably tRNA. Forms a bridge to the 30S subunit in the 70S ribosome.

In terms of biological role, this is one of the proteins that bind and probably mediate the attachment of the 5S RNA into the large ribosomal subunit, where it forms part of the central protuberance. In the 70S ribosome it contacts protein S13 of the 30S subunit (bridge B1b), connecting the 2 subunits; this bridge is implicated in subunit movement. May contact the P site tRNA; the 5S rRNA and some of its associated proteins might help stabilize positioning of ribosome-bound tRNAs. This chain is Large ribosomal subunit protein uL5, found in Methanoculleus marisnigri (strain ATCC 35101 / DSM 1498 / JR1).